The sequence spans 273 residues: Putative phosphoenolpyruvate synthase regulatory protein (273 aa).

153-160 (AVSRAGKT) is a binding site for ADP.

The protein belongs to the pyruvate, phosphate/water dikinase regulatory protein family. PSRP subfamily.

The enzyme catalyses [pyruvate, water dikinase] + ADP = [pyruvate, water dikinase]-phosphate + AMP + H(+). It carries out the reaction [pyruvate, water dikinase]-phosphate + phosphate + H(+) = [pyruvate, water dikinase] + diphosphate. Its function is as follows. Bifunctional serine/threonine kinase and phosphorylase involved in the regulation of the phosphoenolpyruvate synthase (PEPS) by catalyzing its phosphorylation/dephosphorylation. The chain is Putative phosphoenolpyruvate synthase regulatory protein from Xanthomonas campestris pv. campestris (strain ATCC 33913 / DSM 3586 / NCPPB 528 / LMG 568 / P 25).